Reading from the N-terminus, the 525-residue chain is Sterol O-acyltransferase 2 (525 aa).

Disordered stretches follow at residues Met1–Thr34 and Gln77–Pro97. Residues Met1–Phe119 are Cytoplasmic-facing. Over residues Arg9–Arg23 the composition is skewed to basic and acidic residues. A cholesterol-binding site is contributed by His118. A helical membrane pass occupies residues Arg120–Asp141. Topologically, residues Phe142–Gln161 are lumenal. A helical transmembrane segment spans residues Leu162–Trp187. The Cytoplasmic portion of the chain corresponds to Ala188 to Gly199. The helical transmembrane segment at Ala200–Val223 threads the bilayer. At Arg224–Ser231 the chain is on the lumenal side. A helical transmembrane segment spans residues Arg232–Pro255. At Gly256–Arg296 the chain is on the cytoplasmic side. Position 280 is a cysteine sulfenic acid (-SOH); alternate (Cys280). Residue Cys280 forms a Glycyl cysteine thioester (Cys-Gly) (interchain with G-Cter in ubiquitin); alternate linkage. The helical transmembrane segment at Trp297 to Met329 threads the bilayer. Over Ser330–Ala346 the chain is Lumenal. A helical membrane pass occupies residues Thr347–Met372. The Cytoplasmic portion of the chain corresponds to Leu373–Arg420. The short motif at Phe380 to Asn386 is the FYXDWWN motif element. Residues Asn392, Arg395, Asn398, His402, Tyr410, and Ser433 each coordinate an acyl-CoA. The chain crosses the membrane as a helical span at residues Ala421–Leu445. The active site involves His437. Over Gly446–Val451 the chain is Lumenal. Residues Met452–Met467 traverse the membrane as a helical segment. At Asn468–Gly473 the chain is on the cytoplasmic side. Residues Pro474–Cys505 form a helical membrane-spanning segment. The Lumenal portion of the chain corresponds to Pro506 to Pro525.

This sequence belongs to the membrane-bound acyltransferase family. Sterol o-acyltransferase subfamily. In terms of assembly, may form homo- or heterodimers. Interacts with INSIG1; the interaction is direct and promotes association with AMFR/gp78. Post-translationally, polyubiquitinated by AMFR/gp78 at Cys-280, leading to its degradation when the lipid levels are low. Association with AMFR/gp78 is mediated via interaction with INSIG1. High concentration of cholesterol and fatty acid results in Cys-280 oxidation, preventing ubiquitination at the same site, resulting in protein stabilization. In terms of processing, oxidized at Cys-280: high concentration of cholesterol and fatty acid induce reactive oxygen species, which oxidizes Cys-280, preventing ubiquitination at the same site, and resulting in protein stabilization.

The protein localises to the endoplasmic reticulum membrane. It carries out the reaction a sterol + a long-chain fatty acyl-CoA = a long-chain 3-hydroxysterol ester + CoA. The catalysed reaction is cholesterol + an acyl-CoA = a cholesterol ester + CoA. The enzyme catalyses cholesterol + (9Z)-octadecenoyl-CoA = cholesteryl (9Z-octadecenoate) + CoA. It catalyses the reaction (5Z,8Z,11Z,14Z,17Z)-eicosapentaenoyl-CoA + cholesterol = (5Z,8Z,11Z,14Z,17Z-eicosapentaenoyl)-cholesterol + CoA. It carries out the reaction (9Z,12Z,15Z)-octadecatrienoyl-CoA + cholesterol = (9Z,12Z,15Z-octadecatrienoyl)-cholesterol + CoA. The catalysed reaction is (5Z,8Z,11Z,14Z)-eicosatetraenoyl-CoA + cholesterol = cholesteryl (5Z,8Z,11Z,14Z)-eicosatetraenoate + CoA. Functionally, catalyzes the formation of fatty acid-cholesterol esters, which are less soluble in membranes than cholesterol. Plays a role in lipoprotein assembly and dietary cholesterol absorption. Utilizes oleoyl-CoA ((9Z)-octadecenoyl-CoA) and linolenoyl-CoA ((9Z,12Z,15Z)-octadecatrienoyl-CoA) as substrates. May provide cholesteryl esters for lipoprotein secretion from hepatocytes and intestinal mucosa. This is Sterol O-acyltransferase 2 from Mus musculus (Mouse).